The following is a 331-amino-acid chain: MNYLQLPKIDLHCHLDGSVRPQTVIDLAKIQGIDIPSDNVDDIKSLMVAPESCPNLDEYLTRFALPVSVMQTEAALERVSFELFEDAAKENVKYLEVRFGPQLHRKQGLNFEQIIGSVVKGMHRAEALYDIKGNYILSIIKVLPKDDINEVIDAGATFLNKGVVAFDLAASEEPGFCHEYIPYAKYALDKGYRITIHAGEQGVGQNVYDAISLLGAERIGHGIHINNHKDAYELVRAEAVALEACPSSNVQTKAVENIESHPFGDFYRDGLLVTINTDNRTVSDTTMTKELQLAAEKFNLSEQDYFQIYKISVENAFASDEVKQSLLKFIA.

Residues H12 and H14 each contribute to the Zn(2+) site. 2 residues coordinate substrate: H14 and D16. H197 contributes to the Zn(2+) binding site. The active-site Proton donor is the E200. D278 is a binding site for Zn(2+).

The protein belongs to the metallo-dependent hydrolases superfamily. Adenosine and AMP deaminases family. Adenosine deaminase subfamily. It depends on Zn(2+) as a cofactor.

It carries out the reaction adenosine + H2O + H(+) = inosine + NH4(+). The enzyme catalyses 2'-deoxyadenosine + H2O + H(+) = 2'-deoxyinosine + NH4(+). In terms of biological role, catalyzes the hydrolytic deamination of adenosine and 2-deoxyadenosine. The chain is Adenosine deaminase from Shewanella halifaxensis (strain HAW-EB4).